A 107-amino-acid polypeptide reads, in one-letter code: Large ribosomal subunit protein uL24 (107 aa).

Belongs to the universal ribosomal protein uL24 family. As to quaternary structure, part of the 50S ribosomal subunit.

Functionally, one of two assembly initiator proteins, it binds directly to the 5'-end of the 23S rRNA, where it nucleates assembly of the 50S subunit. One of the proteins that surrounds the polypeptide exit tunnel on the outside of the subunit. The chain is Large ribosomal subunit protein uL24 from Carboxydothermus hydrogenoformans (strain ATCC BAA-161 / DSM 6008 / Z-2901).